Here is a 290-residue protein sequence, read N- to C-terminus: UPF0761 membrane protein YihY (290 aa).

The next 6 membrane-spanning stretches (helical) occupy residues 44–64 (LLSL…FPMF), 104–124 (VGAC…DSAL), 140–160 (FAVY…SLAI), 183–203 (ILPL…VPTT), 210–230 (ALVG…GFAL), and 244–264 (VLAV…IVLL).

This sequence belongs to the UPF0761 family.

It localises to the cell inner membrane. This chain is UPF0761 membrane protein YihY, found in Salmonella paratyphi B (strain ATCC BAA-1250 / SPB7).